A 2531-amino-acid polypeptide reads, in one-letter code: Highly reducing polyketide synthase gloL (2531 aa).

Residues 15 to 435 enclose the Ketosynthase family 3 (KS3) domain; that stretch reads YEPLAIVGMG…GANAHVILDS (421 aa). Catalysis depends on for beta-ketoacyl synthase activity residues Cys-187, His-322, and His-358. The segment at 449–525 is disordered; it reads TNGLSVNGHS…GHSVNGHSKP (77 aa). The segment covering 453-503 has biased composition (low complexity); sequence SVNGHSINGNSVNGHSVNGHSTNGHSINGNSVNGHSVNGNSVNGHSTNGHS. The segment covering 505 to 521 has biased composition (polar residues); sequence NGHSANGNSINGHSVNG. Positions 602–909 are malonyl-CoA:ACP transacylase (MAT) domain; it reads MVFTGQGAQW…VTALERGKDC (308 aa). An N-terminal hotdog fold region spans residues 971 to 1099; the sequence is HEILGSRTVE…GQIRSGTDNP (129 aa). Residues 971–1251 form a dehydratase (DH) domain region; sequence HEILGSRTVE…GGQFSPIEED (281 aa). One can recognise a PKS/mFAS DH domain in the interval 971 to 1254; it reads HEILGSRTVE…FSPIEEDSSD (284 aa). His-1003 (proton acceptor; for dehydratase activity) is an active-site residue. Residues 1109–1254 form a C-terminal hotdog fold region; that stretch reads DHPRSVPSPY…FSPIEEDSSD (146 aa). Asp-1169 serves as the catalytic Proton donor; for dehydratase activity. Residues 1419 to 1597 are methyltransferase (CMet) domain; it reads DFFTAAGHSK…FSGCDATVYD (179 aa). An enoyl reductase (ER) (ER) domain region spans residues 1806–2114; the sequence is GLLQTLRWVP…KGSHIGKIVV (309 aa). The tract at residues 2139 to 2312 is ketoreductase (KR) domain; the sequence is GYLLVGGLGG…ASVVDIGVMG (174 aa). The Carrier domain occupies 2413–2505; that stretch reads MSSVETDSSI…ALGLLTIEGL (93 aa). An O-(pantetheine 4'-phosphoryl)serine modification is found at Ser-2464.

It participates in mycotoxin biosynthesis. Its function is as follows. Highly reducing polyketide synthase; part of the gene cluster that mediates the biosynthesis of pneumocandins, lipohexapeptides of the echinocandin family that prevent fungal cell wall formation by non-competitive inhibition of beta-1,3-glucan synthase. The 10,12-dimethylmyristoyl side chain is synthesized by the reducing polyketide synthase gloL/GLPKS4. The thioesterase gloN/GLHYD exclusively interacts with gloL/GLPKS4 to maintain turnover of the polyketide side chain. The 10R,12S-dimethylmyristic acid is then transferred to the first thiolation domain of the nonribosomal peptide synthetase gloA/GLNRPS4 by the acyl-AMP ligase gloD/GLligase, followed by its acylation to L-ornithine to trigger elongation of the cyclic hexapeptide. L-ornithine, 4R-hydroxyl-L-proline (generated from L-proline by the dioxygenase gloF/GLOXY2), 3S-hydroxyl-L-homotyrosine (generated by gloG/GLHtyB, gloH/GLHtyA, gloI/GLHtyC, gloJ/GLHtyD and hydroxylated at C-3 by the dioxygenase gloM/GLOXY1), 3R-hydroxyl-L-glutamine (generated from L-glutamine probably by the dioxygenase gloE/GLOXY3) and 3S-hydroxyl-L-proline (generated from L-proline by the dioxygenase gloF/GLOXY2 to yield pneumocandin B0), or 3S-hydroxyl-4S-methyl-L-proline (generated from L-leucine by the dioxygenase gloC/GLOXY4 to yield pneumocandin A0) are sequentially added to the growing chain. The last C domain of gloA/GLNRPS4 is proposed to be responsible for cyclization by condensation to form the peptide bond between L-ornithine and 3S-hydroxyl-4S-methyl-L-proline (for pneumocandin A0) or 3S-hydroxyl-L-proline (for pneumocandin B0). Finally, the subsequent C-4 hydroxylation of 3S-hydroxyl-L-homotyrosine and L-ornithine dihydroxylation at C-4 and C-5 are performed by the cytochrome P450 monooxygenases gloP/GLP450-1 and gloO/GLP450-2, respectively. This chain is Highly reducing polyketide synthase gloL, found in Glarea lozoyensis (strain ATCC 20868 / MF5171).